The sequence spans 86 residues: MNSKIFAVLLLLGLLSCVLSDQYCPKSSITACKKMNIRNDCCKDDDCTGGSWCCATPCGNFCKYPADRPGGKRAAGGKSCKTGYVY.

The first 20 residues, 1 to 20 (MNSKIFAVLLLLGLLSCVLS), serve as a signal peptide directing secretion. The region spanning 21–66 (DQYCPKSSITACKKMNIRNDCCKDDDCTGGSWCCATPCGNFCKYPA) is the WAP domain. 5 cysteine pairs are disulfide-bonded: C24–C54, C32–C58, C41–C53, C42–C80, and C47–C62.

This sequence belongs to the venom protein 11 family. 01 (wap-1) subfamily. Contains 5 disulfide bonds. In terms of tissue distribution, expressed by the venom gland.

The protein resides in the secreted. Its function is as follows. Has antibacterial activity. The polypeptide is U15-lycotoxin-Ls1g (Lycosa singoriensis (Wolf spider)).